Here is a 463-residue protein sequence, read N- to C-terminus: Probable Xaa-Pro aminopeptidase pepP (463 aa).

Positions 259, 270, 393, and 433 each coordinate Mn(2+).

Belongs to the peptidase M24B family. The cofactor is Mn(2+).

The catalysed reaction is Release of any N-terminal amino acid, including proline, that is linked to proline, even from a dipeptide or tripeptide.. Its function is as follows. Catalyzes the removal of a penultimate prolyl residue from the N-termini of peptides. This chain is Probable Xaa-Pro aminopeptidase pepP (pepP), found in Pyrenophora teres f. teres (strain 0-1) (Barley net blotch fungus).